A 394-amino-acid chain; its full sequence is MKIIKVTDLNLKDKKVLIRSDLNVPIKNGKIMCNMRIIKSLETINFVIKNEAKCVIVASHLGNPIEEKYDYNFSLTHIVNHMKKIIKYPIRLIQNYLNGFEAKEKEIIVLENVRFNPGERKNDKNLSKKYANLCDILVMDSFGSSHRSESSTTGIIKFAPISCIGLLFLKEIKYLKKALFNSKRPIVTIFGGSKISTKLGVIEKLSNISENVLVGGGIANTILFSKGHNIGKSLHDKNNISKIKKFLYKKNIIIPKDFIVTDNINKFSSYKEKSIKEIKNEDYIVDIGKKSCECFIKIIKKAKTIFWNGPLGLIEIKQFRNGTKEIANSVIHSSAKSIIGGGETVLAMRMFNFIDRFSYISTGGGAFLSFIEKQELPVLSELKKFKKYTNFKQN.

Residues 21–23, arginine 36, 60–63, arginine 114, and arginine 147 contribute to the substrate site; these read DLN and HLGN. ATP is bound by residues lysine 198, glutamate 315, and 341 to 344; that span reads GGET.

Belongs to the phosphoglycerate kinase family. Monomer.

It localises to the cytoplasm. The catalysed reaction is (2R)-3-phosphoglycerate + ATP = (2R)-3-phospho-glyceroyl phosphate + ADP. The protein operates within carbohydrate degradation; glycolysis; pyruvate from D-glyceraldehyde 3-phosphate: step 2/5. The chain is Phosphoglycerate kinase from Wigglesworthia glossinidia brevipalpis.